The following is a 2157-amino-acid chain: Polyketide synthase 2 (2157 aa).

The segment at 7-244 (FIFGDQTGGF…IPIPIWAPYH (238 aa)) is N-terminal acylcarrier protein transacylase domain (SAT). In terms of domain architecture, Ketosynthase family 3 (KS3) spans 374–807 (DAKIAIIGMS…GGNSALLLED (434 aa)). Catalysis depends on for beta-ketoacyl synthase activity residues C546, H681, and H723. Positions 908–1213 (GFVFSGQGAQ…ASLHRKDDGW (306 aa)) are malonyl-CoA:ACP transacylase (MAT) domain. S998 acts as the For acyl/malonyl transferase activity in catalysis. Residues 1290–1605 (TSSVQKIIQQ…RSLLNKVLPP (316 aa)) form a product template (PT) domain region. Residues 1294 to 1428 (QKIIQQTDGP…CLLCFADPNS (135 aa)) form an N-terminal hotdog fold region. The 307-residue stretch at 1294–1600 (QKIIQQTDGP…FLGMSRSLLN (307 aa)) folds into the PKS/mFAS DH domain. H1327 serves as the catalytic Proton acceptor; for dehydratase activity. Residues 1455 to 1600 (TDSLLSKGIV…FLGMSRSLLN (146 aa)) are C-terminal hotdog fold. The active-site Proton donor; for dehydratase activity is the D1514. The segment at 1629 to 1653 (AKDTERRPLDIPTRAQRQPNSPPTG) is disordered. Residues 1649–1726 (SPPTGTLGRI…ELKEFLGADQ (78 aa)) enclose the Carrier 1 domain. S1686 is modified (O-(pantetheine 4'-phosphoryl)serine). The segment at 1729–1765 (DDAVACESSNGQHTPQTSDKGSGTLAAQKPDDDTGSD) is disordered. Over residues 1735-1749 (ESSNGQHTPQTSDKG) the composition is skewed to polar residues. The Carrier 2 domain occupies 1765–1839 (DTTLHRVCAI…SLQKALCGTE (75 aa)). S1799 carries the post-translational modification O-(pantetheine 4'-phosphoryl)serine. Residues 1875-2151 (ASPPHATSIL…MAEMGDLIGE (277 aa)) are thioesterase (TE) domain. The active-site For thioesterase activity is the S1981.

Functionally, polyketide synthase; part of the Pks2 gene cluster that mediates the formation of infectious structures (appressoria), enabling these fungi to kill insects faster. The product of the Pks2 gene cluster is different from the one of Pks1 and has still not been identified. This Metarhizium guizhouense (strain ARSEF 977) protein is Polyketide synthase 2.